Reading from the N-terminus, the 384-residue chain is DNA replication and repair protein RecF (384 aa).

43–50 (GENGSGKT) is an ATP binding site.

The protein belongs to the RecF family.

It is found in the cytoplasm. The RecF protein is involved in DNA metabolism; it is required for DNA replication and normal SOS inducibility. RecF binds preferentially to single-stranded, linear DNA. It also seems to bind ATP. The chain is DNA replication and repair protein RecF from Brucella abortus (strain 2308).